Reading from the N-terminus, the 548-residue chain is MGFEELLEQVGGFGPFQLRNVALLALPRVLLPLHFLLPIFLAAVPAHRCALPGAPANFSHQDVWLEAHLPREPDGTLSSCLRFAYPQALPNTTLGEERQSRGELEDEPATVPCSQGWEYDRSEFSSTIATESQWDLVCEQKGLNRAASTFFFAGVLVGAVAFGYLSDRFGRRRLLLVAYVSTLVLGLASAASVSYVMFAITRTLTGSALAGFTIIVMPLELEWLDVEHRTVAGVLSSTFWTGGMMLLALVGYLIRDWRWLLLAVTLPCAPGILSLWWVPESARWLLTQGHVKEAHRYLLHCARLNGRPVCEDSLSQEAVSKVAAGERVVRRPSYLDLFRTPRLRHISLCCVVVWFGVNFSYYGLSLDVSGLGLNVYQTQLLFGAVELPSKLLVYLSVRYAGRRLTQAGTLLGTALAFGTRLLVSSDMKSWSTVLAVMGKAFSEAAFTTAYLFTSELYPTVLRQTGMGLTALVGRLGGSLAPLAALLDGVWLSLPKLTYGGIALLAAGTALLLPETRQAQLPETIQDVERKSAPTSLQEEEMPMKQVQN.

A run of 12 helical transmembrane segments spans residues 21–41 (VALLALPRVLLPLHFLLPIFL), 146–166 (AASTFFFAGVLVGAVAFGYLS), 180–200 (VSTLVLGLASAASVSYVMFAI), 204–224 (LTGSALAGFTIIVMPLELEWL), 234–254 (VLSSTFWTGGMMLLALVGYLI), 259–279 (WLLLAVTLPCAPGILSLWWVP), 346–366 (ISLCCVVVWFGVNFSYYGLSL), 376–397 (YQTQLLFGAVELPSKLLVYLSV), 404–423 (LTQAGTLLGTALAFGTRLLV), 432–452 (TVLAVMGKAFSEAAFTTAYLF), 466–486 (MGLTALVGRLGGSLAPLAALL), and 493–513 (LPKLTYGGIALLAAGTALLLP). Positions 522 to 548 (ETIQDVERKSAPTSLQEEEMPMKQVQN) are disordered.

It belongs to the major facilitator (TC 2.A.1) superfamily. Organic cation transporter (TC 2.A.1.19) family.

The protein resides in the basolateral cell membrane. The protein localises to the apical cell membrane. It localises to the cell membrane. The catalysed reaction is orotate(out) + L-glutamate(in) = orotate(in) + L-glutamate(out). It catalyses the reaction 3',5'-cyclic GMP(in) = 3',5'-cyclic GMP(out). The enzyme catalyses GMP(in) = GMP(out). It carries out the reaction 2'-deoxyguanosine(in) = 2'-deoxyguanosine(out). The catalysed reaction is GDP(in) = GDP(out). It catalyses the reaction guanosine(in) = guanosine(out). The enzyme catalyses GTP(in) = GTP(out). It carries out the reaction 3',5'-cyclic AMP(in) = 3',5'-cyclic AMP(out). The catalysed reaction is creatinine(in) = creatinine(out). It catalyses the reaction prostaglandin E2(out) = prostaglandin E2(in). The enzyme catalyses 2-oxoglutarate(in) = 2-oxoglutarate(out). It carries out the reaction glutarate(in) = glutarate(out). The catalysed reaction is urate(out) = urate(in). It catalyses the reaction estrone 3-sulfate(out) = estrone 3-sulfate(in). In terms of biological role, functions as a Na(+)-independent bidirectional multispecific transporter. Contributes to the renal and hepatic elimination of endogenous organic compounds from the systemic circulation into the urine and bile, respectively. Capable of transporting a wide range of purine and pyrimidine nucleobases, nucleosides and nucleotides, with cGMP, 2'deoxyguanosine and GMP being the preferred substrates. Functions as a pH- and chloride-independent cGMP bidirectional facilitative transporter that can regulate both intracellular and extracellular levels of cGMP and may be involved in cGMP signaling pathways. Mediates orotate/glutamate bidirectional exchange and most likely display a physiological role in hepatic release of glutamate into the blood. Involved in renal secretion and possible reabsorption of creatinine. Able to uptake prostaglandin E2 (PGE2) and may contribute to PGE2 renal excretion. Also transports alpha-ketoglutarate and urate. Apart from the orotate/glutamate exchange, the counterions for the uptake of other SLC22A7/OAT2 substrates remain to be identified. The protein is Solute carrier family 22 member 7 (SLC22A7) of Pongo abelii (Sumatran orangutan).